The sequence spans 445 residues: 3-phosphoshikimate 1-carboxyvinyltransferase (445 aa).

Residues Lys-21, Ser-22, and Arg-26 each coordinate 3-phosphoshikimate. Phosphoenolpyruvate is bound at residue Lys-21. 2 residues coordinate phosphoenolpyruvate: Gly-92 and Arg-120. Positions 165, 166, 307, and 334 each coordinate 3-phosphoshikimate. Gln-166 contacts phosphoenolpyruvate. Asp-307 functions as the Proton acceptor in the catalytic mechanism. Residues Arg-338, Arg-379, and Lys-405 each coordinate phosphoenolpyruvate.

Belongs to the EPSP synthase family. Monomer.

Its subcellular location is the cytoplasm. It catalyses the reaction 3-phosphoshikimate + phosphoenolpyruvate = 5-O-(1-carboxyvinyl)-3-phosphoshikimate + phosphate. Its pathway is metabolic intermediate biosynthesis; chorismate biosynthesis; chorismate from D-erythrose 4-phosphate and phosphoenolpyruvate: step 6/7. Functionally, catalyzes the transfer of the enolpyruvyl moiety of phosphoenolpyruvate (PEP) to the 5-hydroxyl of shikimate-3-phosphate (S3P) to produce enolpyruvyl shikimate-3-phosphate and inorganic phosphate. The chain is 3-phosphoshikimate 1-carboxyvinyltransferase from Chlamydia pneumoniae (Chlamydophila pneumoniae).